Consider the following 431-residue polypeptide: Tyrosine--tRNA ligase (431 aa).

Residue Tyr-34 coordinates L-tyrosine. The 'HIGH' region signature appears at 39 to 48 (PTADSLHIGH). L-tyrosine-binding residues include Tyr-171 and Gln-175. Positions 231 to 235 (KFGKT) match the 'KMSKS' region motif. Lys-234 lines the ATP pocket. The S4 RNA-binding domain occupies 353–422 (INVVEALVKT…GKYTILRRGK (70 aa)).

The protein belongs to the class-I aminoacyl-tRNA synthetase family. TyrS type 1 subfamily. In terms of assembly, homodimer.

The protein localises to the cytoplasm. The enzyme catalyses tRNA(Tyr) + L-tyrosine + ATP = L-tyrosyl-tRNA(Tyr) + AMP + diphosphate + H(+). Its function is as follows. Catalyzes the attachment of tyrosine to tRNA(Tyr) in a two-step reaction: tyrosine is first activated by ATP to form Tyr-AMP and then transferred to the acceptor end of tRNA(Tyr). In Neisseria meningitidis serogroup C (strain 053442), this protein is Tyrosine--tRNA ligase.